We begin with the raw amino-acid sequence, 820 residues long: Catenin beta (820 aa).

A compositionally biased stretch (polar residues) spans 1-16 (MEQARYSNQQSVNPQQ). The segment at 1–74 (MEQARYSNQQ…SRHEDGGEEA (74 aa)) is disordered. A compositionally biased stretch (low complexity) spans 52 to 63 (SSATSHPPSVSS). 10 ARM repeats span residues 157-196 (NYQD…QLSK), 199-239 (ASRH…NLSH), 241-280 (RAGL…NLLL), 283-322 (EGSK…ILAY), 367-405 (HNNK…RNLS), 406-445 (DCHR…NLTC), 448-489 (SRNK…HVTS), 495-535 (EMGQ…NLAL), 603-642 (SHNR…ELSL), and 644-683 (KQGA…RMSD). Positions 708–811 (PWGDPLDMPS…LDSIPPADNT (104 aa)) are disordered. The segment covering 785-796 (GMDPGLPDMGPP) has biased composition (low complexity).

This sequence belongs to the beta-catenin family.

It localises to the cytoplasm. Its subcellular location is the cytoskeleton. Binds to the cytoplasmic domain of the cell-cell adhesion molecule E-cadherin, and perhaps to other (membrane) proteins. The association of catenins to cadherins produces a complex which is linked to the actin filament network, and which seems to be of primary importance for cadherins cell-adhesion properties. The polypeptide is Catenin beta (Tripneustes gratilla (Hawaian sea urchin)).